The primary structure comprises 457 residues: Zinc finger protein ZIPIC (457 aa).

The ZAD domain maps to 3 to 84 (CCICQFSVRV…ILELIHSPYM (82 aa)). C2H2-type zinc fingers lie at residues 257–280 (IQCPSCPEKFSSRRAYNVHTKREH), 284–306 (YVCDQCGKTLQSYSGFIGHLQNH), 312–334 (FACPVCPERFSRKFRLKHHMAWH), 340–362 (YQCDVCSKRFVHKVALYKHKMIH), 369–391 (LECQVCGFKTRTKAHLERHMRSH), and 397–419 (FACPVCNKRFSQMYNMKAHLREH). The segment at 430–448 (FHCSKCTHTFINEQNYDAH) adopts a C2H2-type 7; degenerate zinc-finger fold.

As to quaternary structure, interacts (via region between the ZAD domain and the first zinc finger domain) with Cp190 (via centrosomal targeting M domain); the interaction is direct. Interacts with pita.

It localises to the nucleus. The protein localises to the chromosome. Functionally, insulator DNA-binding protein. Recruits Cp190 and cooperatively binds to chromatin promoter regions to exert transcriptional regulator and chromatin insulator functions. Chromatin insulators are regulatory elements that establish independent domains of transcriptional activity within eukaryotic genomes. Insulators are proposed to structure the chromatin fiber into independent domains of differing transcriptional potential by promoting the formation of distinct chromatin loops to form topologically associating domains (TADs). Chromatin binding sites often cluster with those of other insulator DNA-binding proteins such as pita, CTCF and BEAF-32, but not Su(Hw). This chain is Zinc finger protein ZIPIC, found in Drosophila melanogaster (Fruit fly).